Reading from the N-terminus, the 223-residue chain is Phosphoribosylformylglycinamidine synthase subunit PurQ (223 aa).

One can recognise a Glutamine amidotransferase type-1 domain in the interval 2–223; sequence KFAVLKFPGS…MVNSWREQNV (222 aa). Residue Cys-85 is the Nucleophile of the active site. Active-site residues include His-193 and Glu-195.

In terms of assembly, part of the FGAM synthase complex composed of 1 PurL, 1 PurQ and 2 PurS subunits.

Its subcellular location is the cytoplasm. The catalysed reaction is N(2)-formyl-N(1)-(5-phospho-beta-D-ribosyl)glycinamide + L-glutamine + ATP + H2O = 2-formamido-N(1)-(5-O-phospho-beta-D-ribosyl)acetamidine + L-glutamate + ADP + phosphate + H(+). It catalyses the reaction L-glutamine + H2O = L-glutamate + NH4(+). The protein operates within purine metabolism; IMP biosynthesis via de novo pathway; 5-amino-1-(5-phospho-D-ribosyl)imidazole from N(2)-formyl-N(1)-(5-phospho-D-ribosyl)glycinamide: step 1/2. Part of the phosphoribosylformylglycinamidine synthase complex involved in the purines biosynthetic pathway. Catalyzes the ATP-dependent conversion of formylglycinamide ribonucleotide (FGAR) and glutamine to yield formylglycinamidine ribonucleotide (FGAM) and glutamate. The FGAM synthase complex is composed of three subunits. PurQ produces an ammonia molecule by converting glutamine to glutamate. PurL transfers the ammonia molecule to FGAR to form FGAM in an ATP-dependent manner. PurS interacts with PurQ and PurL and is thought to assist in the transfer of the ammonia molecule from PurQ to PurL. This Staphylococcus saprophyticus subsp. saprophyticus (strain ATCC 15305 / DSM 20229 / NCIMB 8711 / NCTC 7292 / S-41) protein is Phosphoribosylformylglycinamidine synthase subunit PurQ.